Consider the following 548-residue polypeptide: (S)-beta-macrocarpene synthase (548 aa).

The Mg(2+) site is built by Asp302 and Asp306. Residues Asp302, Asp306, Arg443, and Asn446 each contribute to the substrate site. The short motif at 302-306 (DDTLD) is the DDXXD motif element. Mg(2+) contacts are provided by Asn446, Ser450, and Glu454.

It belongs to the terpene synthase family. Monomer. Requires Mg(2+) as cofactor. Mn(2+) is required as a cofactor. Expressed in roots. Not detected in leaves, unless damaged by herbivory or infected by fungi.

It is found in the cytoplasm. The catalysed reaction is (S)-beta-bisabolene = (S)-beta-macrocarpene. It catalyses the reaction (2E,6E)-farnesyl diphosphate = (S)-beta-bisabolene + diphosphate. The enzyme catalyses (2E)-geranyl diphosphate = (4S)-limonene + diphosphate. It carries out the reaction (2E)-geranyl diphosphate = beta-myrcene + diphosphate. The catalysed reaction is (2E)-geranyl diphosphate = terpinolene + diphosphate. It catalyses the reaction (2E)-geranyl diphosphate + H2O = (S)-linalool + diphosphate. It participates in secondary metabolite biosynthesis; terpenoid biosynthesis. In terms of biological role, involved in the biosynthesis of the bicyclic sesquiterpene (S)-beta-macrocarpene. Can use both geranyl diphosphate and farnesyl diphosphate as substrate, but not geranylgeranyl diphosphate. Produces mainly (S)-beta-macrocarpene, but also smaller amounts of beta-bisabolene and (E)-beta-farnesene when used with farnesyl diphosphate as substrate. In the presence of geranyl diphosphate, produces the acyclic monoterpenes beta-myrcene and linalool along with minor amounts of the cyclic compounds limonene, alpha-thujene, sabinene and alpha-terpinolene. May be involved in plant defense. The polypeptide is (S)-beta-macrocarpene synthase (Zea mays (Maize)).